Consider the following 76-residue polypeptide: Large ribosomal subunit protein eL29 (76 aa).

Residues 1–29 are compositionally biased toward basic residues; it reads MAKSKNHTNHNQNKKAHRNGIKRPLRKRH. Disordered stretches follow at residues 1 to 33 and 47 to 76; these read MAKS…ESTL and RKGN…PVTL. S31 is modified (phosphoserine). A compositionally biased stretch (basic and acidic residues) spans 51–62; the sequence is LSREESVKRYNE.

The protein belongs to the eukaryotic ribosomal protein eL29 family.

This Drosophila melanogaster (Fruit fly) protein is Large ribosomal subunit protein eL29 (RpL29).